The following is a 220-amino-acid chain: 7-cyano-7-deazaguanine synthase (220 aa).

10–20 provides a ligand contact to ATP; the sequence is FSGGQDSTTCL. Zn(2+)-binding residues include Cys-186, Cys-195, Cys-198, and Cys-201.

This sequence belongs to the QueC family. Homodimer. Requires Zn(2+) as cofactor.

The enzyme catalyses 7-carboxy-7-deazaguanine + NH4(+) + ATP = 7-cyano-7-deazaguanine + ADP + phosphate + H2O + H(+). It participates in purine metabolism; 7-cyano-7-deazaguanine biosynthesis. Catalyzes the ATP-dependent conversion of 7-carboxy-7-deazaguanine (CDG) to 7-cyano-7-deazaguanine (preQ(0)). This chain is 7-cyano-7-deazaguanine synthase, found in Bacillus cereus (strain G9842).